The chain runs to 705 residues: Solute carrier family 28 member 3 (705 aa).

Over residues 1 to 21 (MSRSDPDPGKNSEPSKSKMSL) the composition is skewed to basic and acidic residues. The disordered stretch occupies residues 1-96 (MSRSDPDPGK…TEEESEDERQ (96 aa)). The Cytoplasmic segment spans residues 1–119 (MSRSDPDPGK…FCRKHRVILQ (119 aa)). Positions 48–63 (APGNSTVRSRVVQSGE) are enriched in polar residues. Residues 65 to 74 (GRAKQDDRQI) show a composition bias toward basic and acidic residues. The chain crosses the membrane as a helical span at residues 120–140 (HTIWAVLLTGFLALVIAACAL). The Extracellular segment spans residues 141 to 145 (NFHRA). The chain crosses the membrane as a helical span at residues 146 to 166 (LPLFVITLVTIFFVVWDRLMA). Over 167–190 (KYEQRIDDVLSPGKRLLERHWFWL) the chain is Cytoplasmic. The chain crosses the membrane as a helical span at residues 191-211 (KWVVWCSLILAVILWLALDTA). Residues 212 to 214 (RLG) lie on the Extracellular side of the membrane. Residues 215–236 (QQQLISFGGLVMYIVLLFLFSK) form a helical membrane-spanning segment. Residues 237 to 244 (HPTRVYWR) lie on the Cytoplasmic side of the membrane. A helical membrane pass occupies residues 245-264 (PVFWGIGLQFLLGLLILRTR). Residues 265-301 (PGFVAFDWMGKQVQTFLGYTDAGAQFVFGEKYTDHFF) lie on the Extracellular side of the membrane. The chain crosses the membrane as a helical span at residues 302–322 (AFKILPIVVFFSTVMSMLYYL). The Cytoplasmic segment spans residues 323–346 (GLMQWIIRKVGWLMLVTMGSSPIE). Positions 347–365 (SVVAAGNIFVGQTESPLLV) form an intramembrane region, helical. The Cytoplasmic portion of the chain corresponds to 366–378 (QPYLPHVTKSELH). Residues 379–401 (TIMTAGFATIAGSVLGAYISFGV) form a helical membrane-spanning segment. At 402-403 (SS) the chain is on the extracellular side. Residues 404-425 (THLLTASVMSAPAALAVAKLFW) traverse the membrane as a helical segment. Topologically, residues 426–460 (PETEKPKITLKNAMKMENGDSRNLLEAATQGASSS) are cytoplasmic. Residues 461–486 (IPLVANIAANLIAFLALLSFVNSALS) traverse the membrane as a helical segment. Residues 487–524 (WFGSMFDYPQLSFELICSYIFMPFSFMMGVDWQDRFMV) lie on the Extracellular side of the membrane. Residues 525–544 (AKLIGYKTFFNEFVAYEHLS) constitute an intramembrane region (helical). Residues 545–583 (KFINLRKAAGPKFVNGVQQYMSIRSETIATYALCGFANF) are Extracellular-facing. Residues 584–594 (GSLGIVIGGLT) form a helical membrane-spanning segment. Topologically, residues 595-607 (SIAPSRKRDIASG) are cytoplasmic. A helical transmembrane segment spans residues 608–630 (AMRALIAGTIACFMTACIAGMLS). Topologically, residues 631 to 705 (DTPVAINCHH…LNCGWIPNIP (75 aa)) are extracellular.

The protein belongs to the concentrative nucleoside transporter (CNT) (TC 2.A.41) family. In terms of assembly, homotrimer. Expressed in kidney; in the proximal tubule, glomerulus and cortical collecting duct.

It is found in the cell membrane. The enzyme catalyses thymidine(out) + 2 Na(+)(out) = thymidine(in) + 2 Na(+)(in). The catalysed reaction is cytidine(out) + 2 Na(+)(out) = cytidine(in) + 2 Na(+)(in). It carries out the reaction uridine(out) + 2 Na(+)(out) = uridine(in) + 2 Na(+)(in). It catalyses the reaction adenosine(out) + 2 Na(+)(out) = adenosine(in) + 2 Na(+)(in). The enzyme catalyses guanosine(out) + 2 Na(+)(out) = guanosine(in) + 2 Na(+)(in). The catalysed reaction is inosine(out) + 2 Na(+)(out) = inosine(in) + 2 Na(+)(in). Sodium-dependent, pyrimidine- and purine-selective. Involved in the homeostasis of endogenous nucleosides. Exhibits the transport characteristics of the nucleoside transport system cib or N3 subtype (N3/cib) (with marked transport of both thymidine and inosine). Employs a 2:1 sodium/nucleoside ratio. Also able to transport gemcitabine, 3'-azido-3'-deoxythymidine (AZT), ribavirin and 3-deazauridine. The protein is Solute carrier family 28 member 3 (Slc28a3) of Rattus norvegicus (Rat).